The primary structure comprises 49 residues: Osteocalcin (49 aa).

One can recognise a Gla domain in the interval tyrosine 1–glycine 47. Position 9 is a hydroxyproline (proline 9). Ca(2+) is bound by residues glutamate 17, glutamate 21, glutamate 24, and aspartate 30. 4-carboxyglutamate is present on residues glutamate 17, glutamate 21, and glutamate 24. Cysteines 23 and 29 form a disulfide.

Belongs to the osteocalcin/matrix Gla protein family. Post-translationally, gamma-carboxyglutamate residues are formed by vitamin K dependent carboxylation by GGCX. These residues are essential for the binding of calcium. Decarboxylation promotes the hormone activity.

Its subcellular location is the secreted. In terms of biological role, the carboxylated form is one of the main organic components of the bone matrix, which constitutes 1-2% of the total bone protein. It acts as a negative regulator of bone formation and is required to limit bone formation without impairing bone resorption or mineralization. The carboxylated form binds strongly to apatite and calcium. Its function is as follows. The uncarboxylated form acts as a hormone secreted by osteoblasts, which regulates different cellular processes, such as energy metabolism, male fertility and brain development. Regulates of energy metabolism by acting as a hormone favoring pancreatic beta-cell proliferation, insulin secretion and sensitivity and energy expenditure. Uncarboxylated osteocalcin hormone also promotes testosterone production in the testes: acts as a ligand for G protein-coupled receptor GPRC6A at the surface of Leydig cells, initiating a signaling response that promotes the expression of enzymes required for testosterone synthesis in a CREB-dependent manner. Also acts as a regulator of brain development: osteocalcin hormone crosses the blood-brain barrier and acts as a ligand for GPR158 on neurons, initiating a signaling response that prevents neuronal apoptosis in the hippocampus, favors the synthesis of all monoamine neurotransmitters and inhibits that of gamma-aminobutyric acid (GABA). Osteocalcin also crosses the placenta during pregnancy and maternal osteocalcin is required for fetal brain development. The sequence is that of Osteocalcin (BGLAP) from Sus scrofa (Pig).